The sequence spans 251 residues: Probable transcriptional regulatory protein DET0444 (251 aa).

This sequence belongs to the TACO1 family.

The protein resides in the cytoplasm. This Dehalococcoides mccartyi (strain ATCC BAA-2266 / KCTC 15142 / 195) (Dehalococcoides ethenogenes (strain 195)) protein is Probable transcriptional regulatory protein DET0444.